Here is a 224-residue protein sequence, read N- to C-terminus: BOS complex subunit TMEM147 (224 aa).

A helical transmembrane segment spans residues 1-21 (MTLFHFGNCFALAYFPYFITY). Residues 22–34 (KCSGLSEYNAFWK) lie on the Cytoplasmic side of the membrane. The chain crosses the membrane as a helical span at residues 35–58 (CVQAGVTYLFVQLCKMLFLATFFP). The Lumenal portion of the chain corresponds to 59–66 (TWEGGIYD). A helical membrane pass occupies residues 67–88 (FIGEFMKASVDVADLIGLNLVM). Over 89–98 (SRNAGKGEYK) the chain is Cytoplasmic. A helical membrane pass occupies residues 99 to 124 (IMVAALGWATAELIMSRCIPLWVGAR). At 125–129 (GIEFD) the chain is on the lumenal side. A helical membrane pass occupies residues 130–155 (WKYIQMSIDSNISLVHYIVASAQVWM). Over 156–164 (ITRYDLYHT) the chain is Cytoplasmic. Residues 165 to 187 (FRPAVLLLMFLSVYKAFVMETFV) form a helical membrane-spanning segment. The Lumenal portion of the chain corresponds to 188-194 (HLCSLGS). Residues 195–216 (WTALLARAVVTGLLALSTLALY) form a helical membrane-spanning segment. The Cytoplasmic segment spans residues 217–224 (VAVVNVHS).

Belongs to the TMEM147 family. In terms of assembly, component of the back of Sec61 (BOS) complex, composed of NCLN/Nicalin, NOMO1 and TMEM147. The BOS complex is part of the multi-pass translocon (MPT) complex, composed of three subcomplexes, the GEL complex (composed of RAB5IF/OPTI and TMCO1), the BOS complex (composed of NCLN/Nicalin, NOMO1 and TMEM147) and the PAT complex (composed of WDR83OS/Asterix and CCDC47). The MPT complex associates with the SEC61 complex. Interacts with CHRM3, CHRM1 and AVPR2. Interacts with LBR; promoting LBR localization to the nucleus inner membrane. Interacts with DHCR7.

The protein resides in the endoplasmic reticulum membrane. It localises to the nucleus membrane. The protein localises to the cell membrane. In terms of biological role, component of the multi-pass translocon (MPT) complex that mediates insertion of multi-pass membrane proteins into the lipid bilayer of membranes. The MPT complex takes over after the SEC61 complex: following membrane insertion of the first few transmembrane segments of proteins by the SEC61 complex, the MPT complex occludes the lateral gate of the SEC61 complex to promote insertion of subsequent transmembrane regions. Also acts as a negative regulator of CHRM3 function, most likely by interfering with its trafficking to the cell membrane. Negatively regulates CHRM3-mediated calcium mobilization and activation of RPS6KA1/p90RSK activity. Regulates LBR localization to the nucleus inner membrane. The sequence is that of BOS complex subunit TMEM147 from Canis lupus familiaris (Dog).